The following is a 687-amino-acid chain: Transcription activator of gluconeogenesis SNOG_12336 (687 aa).

The interval 1 to 56 is disordered; that stretch reads MASPDAEDASPSPEYRSDLDDDMAAEQKTDDGSPSQKSSNGQKPASNAKDPLRPRR. A compositionally biased stretch (polar residues) spans 32–45; that stretch reads GSPSQKSSNGQKPA. The segment at residues 63–91 is a DNA-binding region (zn(2)-C6 fungal-type); the sequence is CFACQRAHLTCGDERPCTRCIKRGLQDHC. 2 stretches are compositionally biased toward polar residues: residues 150–159 and 169–179; these read PSGTFYQPPS and HGRSFSDQQSP. 3 disordered regions span residues 150-214, 300-411, and 536-561; these read PSGT…GPLF, ESQS…KRHR, and GNSREADESEMSTQTNTTPNLTGQEA. A compositionally biased stretch (low complexity) spans 195 to 212; the sequence is PPSSISQGQPGQMQQFGP. Polar residues predominate over residues 300–318; it reads ESQSRQNSMHIHTPTSSAT. A compositionally biased stretch (low complexity) spans 342 to 357; that stretch reads PSSHSTASPASTDASA. Polar residues-rich tracts occupy residues 362-384, 392-402, and 546-561; these read NPLSTATFFANTNRGQPQRSPTT, RPPSTALQPIH, and MSTQTNTTPNLTGQEA. A PAS domain is found at 482–553; sequence NLMTLQDHFT…SEMSTQTNTT (72 aa).

This sequence belongs to the ERT1/acuK family.

Its subcellular location is the nucleus. Transcription factor which regulates nonfermentable carbon utilization. Activator of gluconeogenetic genes. The sequence is that of Transcription activator of gluconeogenesis SNOG_12336 from Phaeosphaeria nodorum (strain SN15 / ATCC MYA-4574 / FGSC 10173) (Glume blotch fungus).